The following is a 121-amino-acid chain: Holin-like protein CidA 1 (121 aa).

Helical transmembrane passes span 7–24 (SGQI…EWIA), 28–50 (HLPV…FNLV), 62–81 (LLKE…IRYR), and 91–113 (LILI…TELL).

Belongs to the CidA/LrgA family. CidA subfamily.

It is found in the cell membrane. In terms of biological role, increases the activity of extracellular murein hydrolases possibly by mediating their export via hole formation. Inhibited by the antiholin-like proteins LrgAB. In an unstressed cell, the LrgAB products probably inhibit the function of the CidA protein. When a cell is stressed by the addition of antibiotics or by other factors in the environment, CidA possibly oligomerizes within the bacterial cell membrane, creating lesions that disrupt the proton motive force, which in turn results in loss of cell viability. These lesions are also hypothesized to regulate the subsequent cell lysis by either allowing the murein hydrolases access to the cell wall substrate and/or regulating their activity by a possible change in the cell wall pH that results from loss of membrane potential. This is Holin-like protein CidA 1 (cidA1) from Bacillus cereus (strain ATCC 14579 / DSM 31 / CCUG 7414 / JCM 2152 / NBRC 15305 / NCIMB 9373 / NCTC 2599 / NRRL B-3711).